The primary structure comprises 682 residues: Methionine--tRNA ligase (682 aa).

A 'HIGH' region motif is present at residues 15–25 (PYANGAIHLGH). Cys-146, Cys-149, Cys-159, and Cys-162 together coordinate Zn(2+). The short motif at 331-335 (KMSKS) is the 'KMSKS' region element. Lys-334 lines the ATP pocket. The tRNA-binding domain occupies 580-682 (DFAKLDMRVA…SGVTAGMQVK (103 aa)).

It belongs to the class-I aminoacyl-tRNA synthetase family. MetG type 1 subfamily. In terms of assembly, homodimer. Zn(2+) is required as a cofactor.

Its subcellular location is the cytoplasm. The enzyme catalyses tRNA(Met) + L-methionine + ATP = L-methionyl-tRNA(Met) + AMP + diphosphate. Is required not only for elongation of protein synthesis but also for the initiation of all mRNA translation through initiator tRNA(fMet) aminoacylation. The polypeptide is Methionine--tRNA ligase (Haemophilus influenzae (strain PittEE)).